The sequence spans 477 residues: Ankyrin repeat, SAM and basic leucine zipper domain-containing protein 1 (477 aa).

Residues 1 to 24 (MAASSLWGPAVAGGGESSESEDDG) form a disordered region. A phosphoserine mark is found at Ser17, Ser18, and Ser20. 6 ANK repeats span residues 45–74 (EKNE…SVDS), 78–107 (YGWT…NASF), 110–144 (DKQT…DPNV), 148–177 (RQMT…EVNA), 181–210 (NGYT…NKML), and 214–243 (DGKT…PLEG). The region spanning 272–334 (SYTAFGELDL…KILSALKELM (63 aa)) is the SAM domain.

Interacts with DDX4, PIWIL1, RANBP9 and TDRD1.

The protein resides in the cytoplasm. Its function is as follows. Plays a central role during spermatogenesis by repressing transposable elements and preventing their mobilization, which is essential for the germline integrity. Acts via the piRNA metabolic process, which mediates the repression of transposable elements during meiosis by forming complexes composed of piRNAs and Piwi proteins and governs the methylation and subsequent repression of transposons. Its association with pi-bodies suggests a participation in the primary piRNAs metabolic process. Required prior to the pachytene stage to facilitate the production of multiple types of piRNAs, including those associated with repeats involved in the regulation of retrotransposons. May act by mediating protein-protein interactions during germ cell maturation. This is Ankyrin repeat, SAM and basic leucine zipper domain-containing protein 1 (ASZ1) from Echinops telfairi (Lesser hedgehog tenrec).